Consider the following 388-residue polypeptide: Alanine racemase 3 (388 aa).

Residue lysine 41 is the Proton acceptor; specific for D-alanine of the active site. At lysine 41 the chain carries N6-(pyridoxal phosphate)lysine. Residue arginine 135 coordinates substrate. Tyrosine 256 (proton acceptor; specific for L-alanine) is an active-site residue. Methionine 304 serves as a coordination point for substrate.

It belongs to the alanine racemase family. Pyridoxal 5'-phosphate is required as a cofactor.

It catalyses the reaction L-alanine = D-alanine. It functions in the pathway amino-acid biosynthesis; D-alanine biosynthesis; D-alanine from L-alanine: step 1/1. Its function is as follows. Catalyzes the interconversion of L-alanine and D-alanine. May also act on other amino acids. The chain is Alanine racemase 3 (alr3) from Mesorhizobium japonicum (strain LMG 29417 / CECT 9101 / MAFF 303099) (Mesorhizobium loti (strain MAFF 303099)).